Here is a 152-residue protein sequence, read N- to C-terminus: Acidic phospholipase A2 (152 aa).

The N-terminal stretch at 1 to 21 (MNPAHLLVLSAVCVSLLGASS) is a signal peptide. Positions 22-27 (IPPQPL) are excised as a propeptide. 7 disulfide bridges follow: Cys-38–Cys-104, Cys-54–Cys-151, Cys-56–Cys-72, Cys-71–Cys-132, Cys-78–Cys-125, Cys-88–Cys-118, and Cys-111–Cys-123. Ca(2+) is bound by residues Tyr-55, Gly-57, and Gly-59. His-75 is a catalytic residue. Residue Asp-76 participates in Ca(2+) binding. Asp-126 is an active-site residue.

The protein belongs to the phospholipase A2 family. Group I subfamily. D49 sub-subfamily. The cofactor is Ca(2+). Expressed by the venom gland.

The protein localises to the secreted. It catalyses the reaction a 1,2-diacyl-sn-glycero-3-phosphocholine + H2O = a 1-acyl-sn-glycero-3-phosphocholine + a fatty acid + H(+). Its function is as follows. PLA2 catalyzes the calcium-dependent hydrolysis of the 2-acyl groups in 3-sn-phosphoglycerides. The protein is Acidic phospholipase A2 of Ophiophagus hannah (King cobra).